Here is a 520-residue protein sequence, read N- to C-terminus: Ribonuclease Y (520 aa).

The chain crosses the membrane as a helical span at residues 3–23; sequence IVIVVISILLALIVGIVVGYL. The span at 81–118 shows a compositional bias: basic and acidic residues; that stretch reads RMEAQKQENRLMQKEENLDRKSETLDKRESSLESKEQS. Positions 81–125 are disordered; sequence RMEAQKQENRLMQKEENLDRKSETLDKRESSLESKEQSLTEQQQQ. The KH domain occupies 210 to 273; that stretch reads TVSVVNLPND…EIARMALEKL (64 aa). Residues 336 to 429 enclose the HD domain; the sequence is GLKHSAEVAY…VAAADALSAA (94 aa).

This sequence belongs to the RNase Y family.

The protein localises to the cell membrane. In terms of biological role, endoribonuclease that initiates mRNA decay. This is Ribonuclease Y from Oceanobacillus iheyensis (strain DSM 14371 / CIP 107618 / JCM 11309 / KCTC 3954 / HTE831).